Consider the following 119-residue polypeptide: Large ribosomal subunit protein bL20 (119 aa).

It belongs to the bacterial ribosomal protein bL20 family.

Functionally, binds directly to 23S ribosomal RNA and is necessary for the in vitro assembly process of the 50S ribosomal subunit. It is not involved in the protein synthesizing functions of that subunit. The chain is Large ribosomal subunit protein bL20 from Acinetobacter baumannii (strain SDF).